Consider the following 400-residue polypeptide: GTPase Obg (400 aa).

Residues 1–159 (MKFVDEVQIR…RTLKLELLLL (159 aa)) enclose the Obg domain. Residues 160–333 (ADVGMLGLPN…VCYDILDLLD (174 aa)) enclose the OBG-type G domain. GTP contacts are provided by residues 166–173 (GLPNAGKS), 191–195 (FTTLV), 213–216 (DIPG), 283–286 (NKMD), and 314–316 (TAI). Residues serine 173 and threonine 193 each coordinate Mg(2+).

Belongs to the TRAFAC class OBG-HflX-like GTPase superfamily. OBG GTPase family. Monomer. The cofactor is Mg(2+).

Its subcellular location is the cytoplasm. Its function is as follows. An essential GTPase which binds GTP, GDP and possibly (p)ppGpp with moderate affinity, with high nucleotide exchange rates and a fairly low GTP hydrolysis rate. Plays a role in control of the cell cycle, stress response, ribosome biogenesis and in those bacteria that undergo differentiation, in morphogenesis control. The protein is GTPase Obg of Aeromonas hydrophila subsp. hydrophila (strain ATCC 7966 / DSM 30187 / BCRC 13018 / CCUG 14551 / JCM 1027 / KCTC 2358 / NCIMB 9240 / NCTC 8049).